The chain runs to 398 residues: MCYGGTAMMAFADIKEALTPKPSAQLYDVPLLYCMLMLMGVGFVMVTSASMPTADRLFGNIYHFTIRHGIFLALSFCLFWITTSVPMSWWKKANPYLLLVGLGLLLIVLIVGREVNGSTRWIPIGPFNIQASELAKLFFFSYISGYLVRKRSEVQENIKGFIKPILVFAAYAGLILMQPDLGTVVVMFVTTVGLLFLAGAKLWQFFVLILTGVALVIGLIVLEPYRMARVIGFLEPWDDPFGKGYQLVQSLMAYSQGDWFGQGLGNSVQKLQYLPEAHTDFIFAVIAEELGFVGVSSILIVLGTLVFRALLIGQNALKNGKEYEGYLALAIGIWFAFQTMVNVGASAGILPTKGLTLPFISYGGSSLLMMTIAAGILLRVDFETKMATKQATSGGAKR.

Topologically, residues 1–25 (MCYGGTAMMAFADIKEALTPKPSAQ) are cytoplasmic. The chain crosses the membrane as a helical span at residues 26 to 46 (LYDVPLLYCMLMLMGVGFVMV). The Periplasmic portion of the chain corresponds to 47 to 69 (TSASMPTADRLFGNIYHFTIRHG). A helical membrane pass occupies residues 70–90 (IFLALSFCLFWITTSVPMSWW). Lys-91 is a topological domain (cytoplasmic). The chain crosses the membrane as a helical span at residues 92–112 (KANPYLLLVGLGLLLIVLIVG). Residues 113-120 (REVNGSTR) are Periplasmic-facing. The chain crosses the membrane as a helical span at residues 121–141 (WIPIGPFNIQASELAKLFFFS). Residues 142–156 (YISGYLVRKRSEVQE) are Cytoplasmic-facing. A helical membrane pass occupies residues 157–177 (NIKGFIKPILVFAAYAGLILM). The Periplasmic portion of the chain corresponds to 178–179 (QP). The helical transmembrane segment at 180–200 (DLGTVVVMFVTTVGLLFLAGA) threads the bilayer. Position 201 (Lys-201) is a topological domain, cytoplasmic. The helical transmembrane segment at 202-222 (LWQFFVLILTGVALVIGLIVL) threads the bilayer. The Periplasmic segment spans residues 223–289 (EPYRMARVIG…DFIFAVIAEE (67 aa)). A helical membrane pass occupies residues 290–312 (LGFVGVSSILIVLGTLVFRALLI). Residues 313–324 (GQNALKNGKEYE) lie on the Cytoplasmic side of the membrane. Residues 325–345 (GYLALAIGIWFAFQTMVNVGA) form a helical membrane-spanning segment. Residues 346-356 (SAGILPTKGLT) are Periplasmic-facing. The helical transmembrane segment at 357–377 (LPFISYGGSSLLMMTIAAGIL) threads the bilayer. Topologically, residues 378 to 398 (LRVDFETKMATKQATSGGAKR) are cytoplasmic.

The protein belongs to the SEDS family. FtsW subfamily.

Its subcellular location is the cell inner membrane. The catalysed reaction is [GlcNAc-(1-&gt;4)-Mur2Ac(oyl-L-Ala-gamma-D-Glu-L-Lys-D-Ala-D-Ala)](n)-di-trans,octa-cis-undecaprenyl diphosphate + beta-D-GlcNAc-(1-&gt;4)-Mur2Ac(oyl-L-Ala-gamma-D-Glu-L-Lys-D-Ala-D-Ala)-di-trans,octa-cis-undecaprenyl diphosphate = [GlcNAc-(1-&gt;4)-Mur2Ac(oyl-L-Ala-gamma-D-Glu-L-Lys-D-Ala-D-Ala)](n+1)-di-trans,octa-cis-undecaprenyl diphosphate + di-trans,octa-cis-undecaprenyl diphosphate + H(+). It participates in cell wall biogenesis; peptidoglycan biosynthesis. Functionally, peptidoglycan polymerase that is essential for cell division. The polypeptide is Probable peptidoglycan glycosyltransferase FtsW (Pseudoalteromonas translucida (strain TAC 125)).